The chain runs to 265 residues: Indole-3-glycerol phosphate synthase (265 aa).

It belongs to the TrpC family.

The catalysed reaction is 1-(2-carboxyphenylamino)-1-deoxy-D-ribulose 5-phosphate + H(+) = (1S,2R)-1-C-(indol-3-yl)glycerol 3-phosphate + CO2 + H2O. It participates in amino-acid biosynthesis; L-tryptophan biosynthesis; L-tryptophan from chorismate: step 4/5. The chain is Indole-3-glycerol phosphate synthase from Xanthomonas oryzae pv. oryzae (strain MAFF 311018).